Reading from the N-terminus, the 462-residue chain is MICIFLFLGFYMQYQTTIAAIATPPGRGGVGVIRLSGPKASLIAEHLTAKTLPAARMAGFRQFYDAEGLVMDEGLVLYFPNPNSFTGEDVVELQGHGGPVIQNALLERLFELGAKAAKAGEFSMRAFENGKLDLVQAEAIADLIDATSQAAARSAVRSLQGAFSLRINQVLEKLIHLRLHVEAAIDFPEEEIDFLADGKILALLDDVRDSVQQVQTSARQGQLLREGLQVVIAGKPNAGKSSLLNALAGNERAIVTDIAGTTRDVLHERISLNGLPITLTDTAGLRETGDIVEKEGIRRAIKEIEQADLLLLVYDLSEGADPLALAQEYFAEHLEPRRLILIGNKCDLMTGHPELAQYQNFRHVTVSAKMDMGVQALIDAITAHAGFQPEEDTFIARTRHLDAMKRTQLHLHEAREQLVVFHAGELVAESLRLAQNALSEITGEFSADDLLGKIFGSFCIGK.

Residues Arg34, Glu92, and Lys131 each coordinate (6S)-5-formyl-5,6,7,8-tetrahydrofolate. Positions 227–386 constitute a TrmE-type G domain; it reads GLQVVIAGKP…LIDAITAHAG (160 aa). Residue Asn237 coordinates K(+). Residues 237 to 242, 256 to 262, and 281 to 284 each bind GTP; these read NAGKSS, TDIAGTT, and DTAG. Residue Ser241 coordinates Mg(2+). Residues Thr256, Ile258, and Thr261 each coordinate K(+). Residue Thr262 participates in Mg(2+) binding. Position 462 (Lys462) interacts with (6S)-5-formyl-5,6,7,8-tetrahydrofolate.

It belongs to the TRAFAC class TrmE-Era-EngA-EngB-Septin-like GTPase superfamily. TrmE GTPase family. As to quaternary structure, homodimer. Heterotetramer of two MnmE and two MnmG subunits. It depends on K(+) as a cofactor.

The protein localises to the cytoplasm. Functionally, exhibits a very high intrinsic GTPase hydrolysis rate. Involved in the addition of a carboxymethylaminomethyl (cmnm) group at the wobble position (U34) of certain tRNAs, forming tRNA-cmnm(5)s(2)U34. The protein is tRNA modification GTPase MnmE of Acinetobacter baylyi (strain ATCC 33305 / BD413 / ADP1).